Reading from the N-terminus, the 102-residue chain is MTGTALTGMMIVAAGLFAAGVFGVLARRGILFQLISLEVALSGPALAFIAAGAYHGDAEGQGMFVLVLTLAAAEVAVGLALFLRIRRSKGSDDSDAVSGLKG.

The next 3 helical transmembrane spans lie at 5 to 25 (ALTG…FGVL), 30 to 50 (ILFQ…AFIA), and 63 to 83 (MFVL…ALFL).

The protein belongs to the complex I subunit 4L family. As to quaternary structure, NDH-1 is composed of 14 different subunits. Subunits NuoA, H, J, K, L, M, N constitute the membrane sector of the complex.

The protein localises to the cell inner membrane. The catalysed reaction is a quinone + NADH + 5 H(+)(in) = a quinol + NAD(+) + 4 H(+)(out). Functionally, NDH-1 shuttles electrons from NADH, via FMN and iron-sulfur (Fe-S) centers, to quinones in the respiratory chain. The immediate electron acceptor for the enzyme in this species is believed to be ubiquinone. Couples the redox reaction to proton translocation (for every two electrons transferred, four hydrogen ions are translocated across the cytoplasmic membrane), and thus conserves the redox energy in a proton gradient. The protein is NADH-quinone oxidoreductase subunit K of Rhodopseudomonas palustris (strain BisB18).